The primary structure comprises 364 residues: Probable dual-specificity RNA methyltransferase RlmN (364 aa).

Catalysis depends on glutamate 106, which acts as the Proton acceptor. Positions 112–350 constitute a Radical SAM core domain; sequence YPRRNTVCIS…SCTVRDTRGR (239 aa). A disulfide bridge links cysteine 119 with cysteine 356. [4Fe-4S] cluster-binding residues include cysteine 126, cysteine 130, and cysteine 133. S-adenosyl-L-methionine contacts are provided by residues 177 to 178, serine 211, 234 to 236, and asparagine 313; these read GE and SLH. Cysteine 356 (S-methylcysteine intermediate) is an active-site residue.

The protein belongs to the radical SAM superfamily. RlmN family. Requires [4Fe-4S] cluster as cofactor.

It localises to the cytoplasm. The enzyme catalyses adenosine(2503) in 23S rRNA + 2 reduced [2Fe-2S]-[ferredoxin] + 2 S-adenosyl-L-methionine = 2-methyladenosine(2503) in 23S rRNA + 5'-deoxyadenosine + L-methionine + 2 oxidized [2Fe-2S]-[ferredoxin] + S-adenosyl-L-homocysteine. The catalysed reaction is adenosine(37) in tRNA + 2 reduced [2Fe-2S]-[ferredoxin] + 2 S-adenosyl-L-methionine = 2-methyladenosine(37) in tRNA + 5'-deoxyadenosine + L-methionine + 2 oxidized [2Fe-2S]-[ferredoxin] + S-adenosyl-L-homocysteine. Specifically methylates position 2 of adenine 2503 in 23S rRNA and position 2 of adenine 37 in tRNAs. This chain is Probable dual-specificity RNA methyltransferase RlmN, found in Mycobacterium bovis (strain ATCC BAA-935 / AF2122/97).